A 131-amino-acid chain; its full sequence is Small ribosomal subunit protein uS8 (131 aa).

It belongs to the universal ribosomal protein uS8 family. In terms of assembly, part of the 30S ribosomal subunit. Contacts proteins S5 and S12.

One of the primary rRNA binding proteins, it binds directly to 16S rRNA central domain where it helps coordinate assembly of the platform of the 30S subunit. The sequence is that of Small ribosomal subunit protein uS8 from Halorhodospira halophila (strain DSM 244 / SL1) (Ectothiorhodospira halophila (strain DSM 244 / SL1)).